The primary structure comprises 230 residues: V-type proton ATPase subunit E1 (230 aa).

Position 1 is an N-acetylmethionine (Met-1). Positions 8–67 (RQIQQMVRFIRQEAEEKANEISVSAEEEFNIEKLQLVEAEKKKIRQDYEKKEKQADVRKK) form a coiled coil. Ser-178 is subject to Phosphoserine.

This sequence belongs to the V-ATPase E subunit family. V-ATPase is a heteromultimeric enzyme composed of a peripheral catalytic V1 complex (components A to H) attached to an integral membrane V0 proton pore complex (components: a, c, c'', d and e).

It is found in the vacuole membrane. In terms of biological role, subunit of the peripheral V1 complex of vacuolar ATPase essential for assembly or catalytic function. V-ATPase is responsible for acidifying a variety of intracellular compartments in eukaryotic cells. Required for Golgi organization and vacuole function in embryogenesis. This chain is V-type proton ATPase subunit E1 (VHA-E1), found in Arabidopsis thaliana (Mouse-ear cress).